The chain runs to 179 residues: Large ribosomal subunit protein uL5 (179 aa).

The protein belongs to the universal ribosomal protein uL5 family. Part of the 50S ribosomal subunit; part of the 5S rRNA/L5/L18/L25 subcomplex. Contacts the 5S rRNA and the P site tRNA. Forms a bridge to the 30S subunit in the 70S ribosome.

Functionally, this is one of the proteins that bind and probably mediate the attachment of the 5S RNA into the large ribosomal subunit, where it forms part of the central protuberance. In the 70S ribosome it contacts protein S13 of the 30S subunit (bridge B1b), connecting the 2 subunits; this bridge is implicated in subunit movement. Contacts the P site tRNA; the 5S rRNA and some of its associated proteins might help stabilize positioning of ribosome-bound tRNAs. The chain is Large ribosomal subunit protein uL5 from Pseudomonas entomophila (strain L48).